The sequence spans 172 residues: Ribosome maturation factor RimM (172 aa).

Residues 96–168 (DGEFYYHEII…RVQVELMEGL (73 aa)) form the PRC barrel domain.

It belongs to the RimM family. In terms of assembly, binds ribosomal protein uS19.

The protein resides in the cytoplasm. An accessory protein needed during the final step in the assembly of 30S ribosomal subunit, possibly for assembly of the head region. Essential for efficient processing of 16S rRNA. May be needed both before and after RbfA during the maturation of 16S rRNA. It has affinity for free ribosomal 30S subunits but not for 70S ribosomes. This Streptococcus agalactiae serotype III (strain NEM316) protein is Ribosome maturation factor RimM.